We begin with the raw amino-acid sequence, 268 residues long: Imidazole glycerol phosphate synthase subunit HisF (268 aa).

Active-site residues include Asp-12 and Asp-131.

This sequence belongs to the HisA/HisF family. Heterodimer of HisH and HisF.

The protein localises to the cytoplasm. The catalysed reaction is 5-[(5-phospho-1-deoxy-D-ribulos-1-ylimino)methylamino]-1-(5-phospho-beta-D-ribosyl)imidazole-4-carboxamide + L-glutamine = D-erythro-1-(imidazol-4-yl)glycerol 3-phosphate + 5-amino-1-(5-phospho-beta-D-ribosyl)imidazole-4-carboxamide + L-glutamate + H(+). It functions in the pathway amino-acid biosynthesis; L-histidine biosynthesis; L-histidine from 5-phospho-alpha-D-ribose 1-diphosphate: step 5/9. In terms of biological role, IGPS catalyzes the conversion of PRFAR and glutamine to IGP, AICAR and glutamate. The HisF subunit catalyzes the cyclization activity that produces IGP and AICAR from PRFAR using the ammonia provided by the HisH subunit. In Salinibacter ruber (strain DSM 13855 / M31), this protein is Imidazole glycerol phosphate synthase subunit HisF.